A 227-amino-acid polypeptide reads, in one-letter code: UPF0758 protein Dred_2549 (227 aa).

One can recognise an MPN domain in the interval 105–227 (IIRCPEDVCG…FTSLKSKGLI (123 aa)). Zn(2+) contacts are provided by histidine 176, histidine 178, and aspartate 189. The JAMM motif signature appears at 176-189 (HNHPSGDPTPSRED).

The protein belongs to the UPF0758 family.

This is UPF0758 protein Dred_2549 from Desulforamulus reducens (strain ATCC BAA-1160 / DSM 100696 / MI-1) (Desulfotomaculum reducens).